The chain runs to 405 residues: S-adenosylmethionine synthase (405 aa).

An ATP-binding site is contributed by 141–146; sequence GQGSVD.

This sequence belongs to the AdoMet synthase 2 family. It depends on Mg(2+) as a cofactor.

It catalyses the reaction L-methionine + ATP + H2O = S-adenosyl-L-methionine + phosphate + diphosphate. It participates in amino-acid biosynthesis; S-adenosyl-L-methionine biosynthesis; S-adenosyl-L-methionine from L-methionine: step 1/1. Functionally, catalyzes the formation of S-adenosylmethionine from methionine and ATP. The protein is S-adenosylmethionine synthase of Methanococcus maripaludis (Methanococcus deltae).